An 84-amino-acid chain; its full sequence is Beta-defensin 119 (84 aa).

The signal sequence occupies residues 1-21 (MKFLFLFLAILLATKIPVISG). Cystine bridges form between cysteine 28–cysteine 55, cysteine 35–cysteine 49, and cysteine 39–cysteine 56.

The protein belongs to the beta-defensin family.

Its subcellular location is the secreted. Has antibacterial activity. This is Beta-defensin 119 (DEFB119) from Macaca fascicularis (Crab-eating macaque).